Reading from the N-terminus, the 545-residue chain is Chaperonin GroEL (545 aa).

ATP-binding positions include 29–32, 86–90, Gly413, 476–478, and Asp492; these read TLGP, DGTTT, and NAA.

This sequence belongs to the chaperonin (HSP60) family. In terms of assembly, forms a cylinder of 14 subunits composed of two heptameric rings stacked back-to-back. Interacts with the co-chaperonin GroES.

The protein localises to the cytoplasm. The catalysed reaction is ATP + H2O + a folded polypeptide = ADP + phosphate + an unfolded polypeptide.. Together with its co-chaperonin GroES, plays an essential role in assisting protein folding. The GroEL-GroES system forms a nano-cage that allows encapsulation of the non-native substrate proteins and provides a physical environment optimized to promote and accelerate protein folding. The chain is Chaperonin GroEL from Shouchella clausii (strain KSM-K16) (Alkalihalobacillus clausii).